We begin with the raw amino-acid sequence, 282 residues long: 4-hydroxybenzoate octaprenyltransferase (282 aa).

9 helical membrane passes run 17-37 (IGILLLWYPTAWALWMANQGF), 40-60 (IDLLMIFLFGTVFMRSAGCVI), 90-110 (AFILLFILLCASLLLLLKLPI), 113-133 (FYFAVISVLITFLYPFCKRFL), 135-155 (APQLILGLAFSMGIPMAFIAS), 163-183 (FIVLFLINFSWIIAYDTMYAM), 207-227 (LIIALLLIFLHSLWLVWAINK), 231-251 (WFFYLLWCTAAGILTYQLKLI), and 262-282 (AFLVSGYYGLVMWFAVGLALI).

It belongs to the UbiA prenyltransferase family. The cofactor is Mg(2+).

The protein localises to the cell inner membrane. It carries out the reaction all-trans-octaprenyl diphosphate + 4-hydroxybenzoate = 4-hydroxy-3-(all-trans-octaprenyl)benzoate + diphosphate. It participates in cofactor biosynthesis; ubiquinone biosynthesis. Its function is as follows. Catalyzes the prenylation of para-hydroxybenzoate (PHB) with an all-trans polyprenyl group. Mediates the second step in the final reaction sequence of ubiquinone-8 (UQ-8) biosynthesis, which is the condensation of the polyisoprenoid side chain with PHB, generating the first membrane-bound Q intermediate 3-octaprenyl-4-hydroxybenzoate. This is 4-hydroxybenzoate octaprenyltransferase from Legionella pneumophila (strain Corby).